The following is a 290-amino-acid chain: Homeobox protein HMX3-B (290 aa).

2 disordered regions span residues 1 to 41 (MADS…GSSK) and 96 to 169 (EKVN…KKKT). Residues 107 to 124 (LDRHTPDPPKSDQESKEE) are compositionally biased toward basic and acidic residues. Residues 125-137 (SADDEIALEESDA) show a composition bias toward acidic residues. Positions 138 to 162 (EEPKKETDQEDDWMRKGEDLESDKK) are enriched in basic and acidic residues. Positions 166 to 225 (KKKTRTVFSRSQVFQLESTFDIKRYLSSSERAGLAASLHLTETQVKIWFQNRRNKWKRQL) form a DNA-binding region, homeobox.

This sequence belongs to the HMX homeobox family. Expressed in the ear placode and vesicle and in cells forming the vestibulo-acoustic ganglion.

It localises to the nucleus. Its function is as follows. Transcription factor involved in specification of neuronal cell types and which is required for inner ear and hypothalamus development. Binds to the 5'-CAAGTG-3' core sequence. The sequence is that of Homeobox protein HMX3-B (hmx3b) from Oryzias latipes (Japanese rice fish).